We begin with the raw amino-acid sequence, 442 residues long: MIRGAWMYPREDEAVLKICWEPRHSDKPCADSERAQRWRMSLASLLFFTVLLSNHLWLVSAGAKARGSFTFSLQPANSSLLPPQSFPGEGRGCWDTFLSNLTKSAAQPPHCTGVRSTHLDTACAKLHYLQRHRGSFSPSYPQPSSWSSSYWSYPPSSFSSKRNFLKAYFRNYTLSFCDTYTILDLLLGMSNPDSLDCSLESLMEDFVGAAAASPALIEGEVCSSCIQAYQRLDQHAQEKYEEFDFVLEKYLQSGEYSVRSCVGDCKAVYKAWLCSEYFNVTQRQCRHRIPCKQYCLEVQTRCPFMLPDNDDLIYGGLPGFICTDMLENHMSNTEAECCDVRWHSCKTQGSGNHNTSTKSTDSRFKYYPHHQHHRDHHLHPYHHQHHQSLLPVSAGSRLGNTRLRLCVLVLMLLHTMASFSVVQNGVTLEPLPGLDDSSSHEE.

The chain crosses the membrane as a helical span at residues 42 to 62; the sequence is LASLLFFTVLLSNHLWLVSAG. Residues N77, N100, N171, N279, and N354 are each glycosylated (N-linked (GlcNAc...) asparagine). Residues 406–426 traverse the membrane as a helical segment; it reads CVLVLMLLHTMASFSVVQNGV.

This sequence belongs to the NALF family.

Its subcellular location is the membrane. In terms of biological role, probable component of the NALCN channel complex, a channel that regulates the resting membrane potential and controls neuronal excitability. The sequence is that of NALCN channel auxiliary factor 2 (nalf2) from Xenopus tropicalis (Western clawed frog).